Here is a 380-residue protein sequence, read N- to C-terminus: Cytochrome b (380 aa).

Helical transmembrane passes span 34 to 54, 78 to 99, 114 to 134, and 179 to 199; these read FGSL…LLAM, WLIR…YLHI, WNTG…GYVL, and FFAL…IHLT. Heme b-binding residues include histidine 84 and histidine 98. Heme b is bound by residues histidine 183 and histidine 197. Residue histidine 202 coordinates a ubiquinone. 4 consecutive transmembrane segments (helical) span residues 227–247, 289–309, 321–341, and 348–368; these read TKDI…ALFS, LGGV…PLLH, LSQL…WIGS, and FIII…ILFP.

This sequence belongs to the cytochrome b family. As to quaternary structure, the cytochrome bc1 complex contains 11 subunits: 3 respiratory subunits (MT-CYB, CYC1 and UQCRFS1), 2 core proteins (UQCRC1 and UQCRC2) and 6 low-molecular weight proteins (UQCRH/QCR6, UQCRB/QCR7, UQCRQ/QCR8, UQCR10/QCR9, UQCR11/QCR10 and a cleavage product of UQCRFS1). This cytochrome bc1 complex then forms a dimer. It depends on heme b as a cofactor.

The protein resides in the mitochondrion inner membrane. Component of the ubiquinol-cytochrome c reductase complex (complex III or cytochrome b-c1 complex) that is part of the mitochondrial respiratory chain. The b-c1 complex mediates electron transfer from ubiquinol to cytochrome c. Contributes to the generation of a proton gradient across the mitochondrial membrane that is then used for ATP synthesis. In Pygoscelis antarcticus (Chinstrap penguin), this protein is Cytochrome b (MT-CYB).